The following is a 1823-amino-acid chain: Laminin subunit alpha-4 (1823 aa).

Positions 1–24 are cleaved as a signal peptide; the sequence is MALSSAWRSVLPLWLLWSAACSRA. S39 carries O-linked (Xyl...) (chondroitin sulfate) serine glycosylation. Intrachain disulfides connect C82–C91, C84–C98, C101–C110, C113–C129, C132–C146, C134–C155, C157–C166, C169–C184, C187–C202, C189–C209, C212–C221, and C224–C238. Laminin EGF-like domains follow at residues 82-131, 132-186, and 187-240; these read CDCN…FCQP, CPCP…TCKK, and CDCS…NCAV. N104 is a glycosylation site (N-linked (GlcNAc...) asparagine). N-linked (GlcNAc...) asparagine glycosylation occurs at N215. The Laminin EGF-like 4; truncated domain maps to 241–255; sequence CNCGGGPCDSVTGEC. The segment at 256–832 is domain II and I; that stretch reads LEEGFEPPTG…AQTRSVASKI (577 aa). Residue N315 is glycosylated (N-linked (GlcNAc...) asparagine). A coiled-coil region spans residues 320–403; sequence LLKTKLSERE…KIQEINNKML (84 aa). A glycan (N-linked (GlcNAc...) asparagine) is linked at N465. The stretch at 473 to 528 forms a coiled coil; the sequence is VVLEQLDDYNAKLSDLQEALDQALNYVRDAEDMNRATAARQRDHEKQQERVREQME. N531, N557, N578, N581, N638, and N646 each carry an N-linked (GlcNAc...) asparagine glycan. A coiled-coil region spans residues 581-614; the sequence is NLSHDLVQEAIDHAQDLQQEANELSRKLHSSDMN. Positions 662-724 form a coiled coil; that stretch reads IIYHKDESEN…AVKQLQAAER (63 aa). The Cell attachment site motif lies at 724–726; it reads RGD. N-linked (GlcNAc...) asparagine glycans are attached at residues N742, N758, N761, N787, and N810. The stretch at 777–806 forms a coiled coil; the sequence is AVNSARDAVRNLTEVVPQLLDQLRTVEQKR. Laminin G-like domains are found at residues 833–1035, 1047–1227, and 1234–1402; these read QVSM…SVPC, AASY…GYGC, and SRRA…LYEC. Cysteines 1005 and 1035 form a disulfide. N-linked (GlcNAc...) asparagine glycosylation is present at N1093. Residues C1201 and C1227 are joined by a disulfide bond. 2 N-linked (GlcNAc...) asparagine glycosylation sites follow: N1288 and N1366. An intrachain disulfide couples C1370 to C1402. A glycan (N-linked (GlcNAc...) asparagine) is linked at N1418. Residues 1419–1440 are disordered; that stretch reads LSKPKASQNKKGGKSKDAPSWD. 2 Laminin G-like domains span residues 1469 to 1640 and 1647 to 1820; these read AYQY…VTPC and TGTY…INSC. Disulfide bonds link C1617-C1640 and C1792-C1820.

As to quaternary structure, laminin is a complex glycoprotein, consisting of three different polypeptide chains (alpha, beta, gamma), which are bound to each other by disulfide bonds into a cross-shaped molecule comprising one long and three short arms with globules at each end. Alpha-4 is a subunit of laminin-8 (laminin-411), laminin-9 (laminin-421) and laminin-14 (laminin-423). In terms of tissue distribution, detected in placenta (at protein level). Detected in fibroblasts and urine (at protein level). In adult, strong expression in heart, lung, ovary small and large intestines, placenta, liver; weak or no expression in skeletal muscle, kidney, pancreas, testis, prostate, brain. High expression in fetal lung and kidney. Expression in fetal and newborn tissues is observed in certain mesenchymal cells in tissues such as smooth muscle and dermis.

It is found in the secreted. The protein localises to the extracellular space. It localises to the extracellular matrix. The protein resides in the basement membrane. Functionally, binding to cells via a high affinity receptor, laminin is thought to mediate the attachment, migration and organization of cells into tissues during embryonic development by interacting with other extracellular matrix components. The sequence is that of Laminin subunit alpha-4 (LAMA4) from Homo sapiens (Human).